Consider the following 61-residue polypeptide: Tryptophyllin-1 (61 aa).

Residues 1-22 (MDILKKSLFLALFLGLVSISFC) form the signal peptide. Positions 23–53 (DEEKRQDDDESNESEEKKEIHEEGSQEERRE) are excised as a propeptide. Residues 24-61 (EEKRQDDDESNESEEKKEIHEEGSQEERREKPPPWVPV) are disordered. The segment covering 36–55 (SEEKKEIHEEGSQEERREKP) has biased composition (basic and acidic residues).

As to expression, expressed by the skin glands.

Its subcellular location is the secreted. The synthetic peptide inhibits bradykinin-induced relaxation of rat tail artery smooth muscle, and also has anti-proliferative effects on the human prostate cancer cell lines LNCaP, PC3 and DU145. The polypeptide is Tryptophyllin-1 (Phyllomedusa sauvagei (Sauvage's leaf frog)).